The chain runs to 99 residues: Goannatyrotoxin-Vere1 (99 aa).

The N-terminal stretch at 1 to 28 (MIASMKPWPLVMVAALCILFCLGTLVDA) is a signal peptide. Residue Tyr64 is modified to Tyrosine amide. Residues 68-99 (SSPETLMSELIFGENSNSDHSSRSRFDDSYMW) constitute a propeptide, C-terminal extension.

The protein belongs to the NPY family. Expressed by the mandibular venom gland.

Its subcellular location is the secreted. In terms of biological role, shows a potent unique triphasic action, rapid biphasic hypertension followed by prolonged hypotension. The polypeptide is Goannatyrotoxin-Vere1 (Varanus eremius (Rusty desert monitor)).